The following is a 250-amino-acid chain: Triosephosphate isomerase (250 aa).

Asparagine 9–lysine 11 contributes to the substrate binding site. Histidine 95 serves as the catalytic Electrophile. Glutamate 167 serves as the catalytic Proton acceptor. Residues glycine 173, serine 212, and glycine 233 to glycine 234 each bind substrate.

The protein belongs to the triosephosphate isomerase family. Homodimer.

It localises to the cytoplasm. It carries out the reaction D-glyceraldehyde 3-phosphate = dihydroxyacetone phosphate. It participates in carbohydrate biosynthesis; gluconeogenesis. Its pathway is carbohydrate degradation; glycolysis; D-glyceraldehyde 3-phosphate from glycerone phosphate: step 1/1. Functionally, involved in the gluconeogenesis. Catalyzes stereospecifically the conversion of dihydroxyacetone phosphate (DHAP) to D-glyceraldehyde-3-phosphate (G3P). The polypeptide is Triosephosphate isomerase (Endomicrobium trichonymphae).